The chain runs to 205 residues: Adenylyl-sulfate kinase (205 aa).

31–38 (GLSGAGKS) provides a ligand contact to ATP. Serine 105 acts as the Phosphoserine intermediate in catalysis.

Belongs to the APS kinase family.

It carries out the reaction adenosine 5'-phosphosulfate + ATP = 3'-phosphoadenylyl sulfate + ADP + H(+). It participates in sulfur metabolism; hydrogen sulfide biosynthesis; sulfite from sulfate: step 2/3. In terms of biological role, catalyzes the synthesis of activated sulfate. The polypeptide is Adenylyl-sulfate kinase (Shewanella putrefaciens (strain CN-32 / ATCC BAA-453)).